A 169-amino-acid polypeptide reads, in one-letter code: N-alpha-acetyltransferase 50 (169 aa).

Positions 5–154 (IELGDVTPHN…DAHVLQKNLK (150 aa)) constitute an N-acetyltransferase domain. Residue tyrosine 30 coordinates substrate. Tyrosine 72 is an active-site residue. Methionine 74 provides a ligand contact to substrate. 76 to 89 (LGCLAPYRRLGIGT) is a binding site for acetyl-CoA. 78 to 89 (CLAPYRRLGIGT) contacts CoA. Histidine 111 is an active-site residue. 116–125 (NESAIDFYRK) lines the CoA pocket. Residues 137-140 (YYKR) are substrate.

Belongs to the acetyltransferase family. GNAT subfamily.

It is found in the cytoplasm. Its subcellular location is the nucleus. It carries out the reaction N-terminal L-methionyl-L-alanyl-[protein] + acetyl-CoA = N-terminal N(alpha)-acetyl-L-methionyl-L-alanyl-[protein] + CoA + H(+). The enzyme catalyses N-terminal L-methionyl-L-seryl-[protein] + acetyl-CoA = N-terminal N(alpha)-acetyl-L-methionyl-L-seryl-[protein] + CoA + H(+). It catalyses the reaction N-terminal L-methionyl-L-valyl-[protein] + acetyl-CoA = N-terminal N(alpha)-acetyl-L-methionyl-L-valyl-[protein] + CoA + H(+). The catalysed reaction is N-terminal L-methionyl-L-threonyl-[protein] + acetyl-CoA = N-terminal N(alpha)-acetyl-L-methionyl-L-threonyl-[protein] + CoA + H(+). It carries out the reaction N-terminal L-methionyl-L-lysyl-[protein] + acetyl-CoA = N-terminal N(alpha)-acetyl-L-methionyl-L-lysyl-[protein] + CoA + H(+). The enzyme catalyses N-terminal L-methionyl-L-leucyl-[protein] + acetyl-CoA = N-terminal N(alpha)-acetyl-L-methionyl-L-leucyl-[protein] + CoA + H(+). It catalyses the reaction N-terminal L-methionyl-L-phenylalanyl-[protein] + acetyl-CoA = N-terminal N(alpha)-acetyl-L-methionyl-L-phenylalanyl-[protein] + CoA + H(+). The catalysed reaction is N-terminal L-methionyl-L-tyrosyl-[protein] + acetyl-CoA = N-terminal N(alpha)-acetyl-L-methionyl-L-tyrosyl-[protein] + CoA + H(+). Functionally, N-alpha-acetyltransferase that acetylates the N-terminus of proteins that retain their initiating methionine. Has a broad substrate specificity: able to acetylate the initiator methionine of most peptides, except for those with a proline in second position. Also displays N-epsilon-acetyltransferase activity by mediating acetylation of the side chain of specific lysines on proteins. The relevance of N-epsilon-acetyltransferase activity is however unclear. Required for sister chromatid cohesion during mitosis by promoting binding of CDCA5/sororin to cohesin. The chain is N-alpha-acetyltransferase 50 (naa50) from Xenopus tropicalis (Western clawed frog).